The chain runs to 563 residues: Cytochrome P450 monooxygenase phqL (563 aa).

The next 3 membrane-spanning stretches (helical) occupy residues 20–40 (ENFS…IIIF), 52–72 (IPVG…FVPG), and 80–100 (ALWL…VSIL). Asn279 carries N-linked (GlcNAc...) asparagine glycosylation. Residues 362-382 (LVIFAGSGTVAVTIIGCLYFL) traverse the membrane as a helical segment. A glycan (N-linked (GlcNAc...) asparagine) is linked at Asn419. Cys502 contacts heme.

Belongs to the cytochrome P450 family. It depends on heme as a cofactor.

It is found in the membrane. It participates in alkaloid biosynthesis. Its function is as follows. Cytochrome P450 monooxygenase; part of the gene cluster that mediates the biosynthesis of paraherquamide, a fungal indole alkaloid that belongs to a family of natural products containing a characteristic bicyclo[2.2.2]diazaoctane core. The first steps in the biosynthesis of paraherquamide is the production of the beta-methyl-proline precursor from L-isoleucine. They require oxidation of a terminally hydroxylated L-isoleucine to the corresponding aldehyde by enzymes which have still to be identified. Spontaneous cyclization and dehydration would yield the 4-methyl pyrolline-5-carboxylic acid, which is then reduced by the pyrroline-5-carboxylate reductase phqD leading to the beta-methyl-proline precursor. The next step of paraherquamide biosynthesis involves coupling of beta-methyl-proline and L-tryptophan by the bimodular NRPS phqB, to produce a monooxopiperazine intermediate. The reductase (R) domain of phqB utilizes NADPH for hydride transfer to reduce the thioester bond of the T domain-tethered linear dipeptide to a hemithioaminal intermediate, which spontaneously cleaves the C-S bond to release the aldehyde product. This compound undergoes spontaneous cyclization and dehydration to give a dienamine which is reverse prenylated at C-2 by the reverse prenyltransferase phqJ. The other prenyltransferase present in the cluster, phqI may be a redundant gene in the pathway. During biosynthetic assembly, the key step to produce the polycyclic core is catalyzed by the bifunctional reductase and intramolecular [4+2] Diels-Alderase, phqE, resulting in formation of the [2.2.2] diazaoctane intermediate preparaherquamide. Following formation of preparaherquamide, an indole 2,3-epoxidation-initiated pinacol-like rearrangement is catalyzed by the phqK FAD-dependent monooxygenase. The prenyltransferase phqA, the cytochrome P450 monooxygenase phqL, and the FAD-linked oxidoreductase phqH (or the cytochrome P450 monooxygenase phqM), are proposed to be involved in the formation of the pyran ring. The FAD-dependent monooxygenase phqK is likely responsible for generation of the spiro-oxindole, and the N-methylation is likely mediated by the phqN methyltransferase leading to the isolable natural product paraherquamide F. However, the order of these biosynthetic steps has still to be determined. In late-stage paraherquamide biosynthesis, the third P450 monooxygenase, phqO, is probably responsible for the C-14 hydroxylation, transforming paraherquamide F to paraherquamide G, and paraherquamide E to the final product paraherquamide A. The expansion from the 6-membered ring pyran (in paraherquamides F and G) to the 7-membered dioxepin ring (in paraherquamides A and E) represents a poorly understood but intriguing process that probably involves the 2-oxoglutarate-dependent dioxygenase phqC. Finally, the remaining members of the paraherquamide cluster, including phqI as well as phqM (or phqH), do not have a clearly prescribed role and appear to be redundant. This chain is Cytochrome P450 monooxygenase phqL, found in Penicillium fellutanum.